The sequence spans 456 residues: UDP-N-acetylglucosamine 1-carboxyvinyltransferase (456 aa).

34–35 (KN) contributes to the phosphoenolpyruvate binding site. A UDP-N-acetyl-alpha-D-glucosamine-binding site is contributed by Arg104. The active-site Proton donor is the Cys128. Cys128 is subject to 2-(S-cysteinyl)pyruvic acid O-phosphothioketal. UDP-N-acetyl-alpha-D-glucosamine is bound by residues Asp319 and Ile341.

Belongs to the EPSP synthase family. MurA subfamily.

The protein localises to the cytoplasm. It carries out the reaction phosphoenolpyruvate + UDP-N-acetyl-alpha-D-glucosamine = UDP-N-acetyl-3-O-(1-carboxyvinyl)-alpha-D-glucosamine + phosphate. It functions in the pathway cell wall biogenesis; peptidoglycan biosynthesis. Functionally, cell wall formation. Adds enolpyruvyl to UDP-N-acetylglucosamine. The chain is UDP-N-acetylglucosamine 1-carboxyvinyltransferase from Prochlorococcus marinus (strain MIT 9301).